The sequence spans 360 residues: MLVWLAEYLVRYETAFNAISYITVRAILALLTALFISLWIGPKVIKRLQILKFGQEVRNDGPESHFAKKGTPTMGGVMILFSIGVSTLLWANLANSYIWVCLFVLFGYGAIGFVDDFRKITRKNTDGLIARWKYFWMSVVALVAILWLYWLGHDTDATRLVIPFFKDIMPQLGLFYIVLSYFVIVGTGNAVNLTDGLDGLAIMPTALVAGAFALIAWATGNVNFAEYLHIPYIKYSSEVVVFCTAIVGASLGFLWFNTYPAQVFMGDVGSLALGGALGVVAILVRQEFLLVIMGGVFVVEALSVILQVGSYKLRKQRIFRMAPIHHHFELKGWPEPRVIIRFWIISLMLVLMGLVTLKLR.

The next 10 helical transmembrane spans lie at 21–41 (YITV…LWIG), 73–93 (TMGG…WANL), 94–114 (ANSY…IGFV), 132–152 (WKYF…YWLG), 168–188 (IMPQ…VGTG), 199–219 (GLAI…AWAT), 239–259 (VVVF…FNTY), 263–283 (VFMG…VAIL), 288–308 (FLLV…ILQV), and 338–358 (VIIR…VTLK).

The protein belongs to the glycosyltransferase 4 family. MraY subfamily. Mg(2+) is required as a cofactor.

The protein resides in the cell inner membrane. The catalysed reaction is UDP-N-acetyl-alpha-D-muramoyl-L-alanyl-gamma-D-glutamyl-meso-2,6-diaminopimeloyl-D-alanyl-D-alanine + di-trans,octa-cis-undecaprenyl phosphate = di-trans,octa-cis-undecaprenyl diphospho-N-acetyl-alpha-D-muramoyl-L-alanyl-D-glutamyl-meso-2,6-diaminopimeloyl-D-alanyl-D-alanine + UMP. It participates in cell wall biogenesis; peptidoglycan biosynthesis. Catalyzes the initial step of the lipid cycle reactions in the biosynthesis of the cell wall peptidoglycan: transfers peptidoglycan precursor phospho-MurNAc-pentapeptide from UDP-MurNAc-pentapeptide onto the lipid carrier undecaprenyl phosphate, yielding undecaprenyl-pyrophosphoryl-MurNAc-pentapeptide, known as lipid I. The polypeptide is Phospho-N-acetylmuramoyl-pentapeptide-transferase (Haemophilus influenzae (strain 86-028NP)).